Here is an 89-residue protein sequence, read N- to C-terminus: Phosphocarrier protein HPr (89 aa).

An HPr domain is found at 1–88 (MLEHELIVTN…ELFENRFNED (88 aa)). The Pros-phosphohistidine intermediate role is filled by His-15. Ser-46 bears the Phosphoserine; by HPrK/P mark.

This sequence belongs to the HPr family.

The protein resides in the cytoplasm. With respect to regulation, phosphorylation on Ser-46 inhibits the phosphoryl transfer from enzyme I to HPr. Functionally, general (non sugar-specific) component of the phosphoenolpyruvate-dependent sugar phosphotransferase system (sugar PTS). This major carbohydrate active-transport system catalyzes the phosphorylation of incoming sugar substrates concomitantly with their translocation across the cell membrane. The phosphoryl group from phosphoenolpyruvate (PEP) is transferred to the phosphoryl carrier protein HPr by enzyme I. Phospho-HPr then transfers it to the PTS EIIA domain. The polypeptide is Phosphocarrier protein HPr (ptsH) (Xylella fastidiosa (strain 9a5c)).